The sequence spans 20 residues: Hemocyanin subunit II (20 aa).

Residues 1–20 (DVVASSTAHKQQDINHLLDK) are disordered. The span at 10 to 20 (KQQDINHLLDK) shows a compositional bias: basic and acidic residues.

It belongs to the tyrosinase family. Hemocyanin subfamily. As to quaternary structure, composed of 3 major subunits (IB, II and III) and 1 minor subunit (IA) which form homohexamers and heterohexamers. May also form larger structures. In terms of tissue distribution, hemolymph.

It is found in the secreted. Its subcellular location is the extracellular space. In terms of biological role, hemocyanins are copper-containing oxygen carriers occurring freely dissolved in the hemolymph of many mollusks and arthropods. The polypeptide is Hemocyanin subunit II (Panulirus japonicus (Japanese spiny lobster)).